Consider the following 307-residue polypeptide: Type 2A encapsulin shell protein (307 aa).

The protein belongs to the encapsulin family. Family 2A subfamily. In terms of assembly, homooligomeric. The encapsulin nanocompartment is formed by 60 subunits; monomers form pentamers which assemble to form shells. There are 12 charged pores where the pentamers meet as well as 3-fold axis channels and dimer channels.

The protein localises to the encapsulin nanocompartment. Functionally, shell component of a type 2A encapsulin nanocompartment. Forms encapsulin nanocompartments about 24 nm in diameter from 60 monomers. Probably encapsulates at least cysteine desulfurase (CyD) and allows passage of cysteine into its interior, probably involved in sulfur metabolism. This is Type 2A encapsulin shell protein from Mycobacterium avium.